The chain runs to 266 residues: MDTILGILNVQKLHTTSKHQENKDKPPETRRRGTINSILLAMSTVFPVFVFFTHREDGFDGNILLRFTTLVFPFSYSAAQHFLLLSSNWGSSCRSSSGLYRALCLALNALLAVFFVISICSLILFTADEWDDNEALTICSMLFPSLLLSSTCLLSISCNFATFQFVDSGPDIPIDLLIFLCLVILHKTSPLEDYEYLPYFAIPSFILVLVRSFKERLLPRKSSPPAAAWRVAVFLLILVLTISVYVFISRVCWAVIESKWEALTSD.

The protein belongs to the UPF0328 family.

The chain is UPF0328 protein ECU05_1610/ECU11_0120 from Encephalitozoon cuniculi (strain GB-M1) (Microsporidian parasite).